Here is a 384-residue protein sequence, read N- to C-terminus: Ribonucleoside-diphosphate reductase small chain (384 aa).

Fe cation-binding residues include Asp130, Glu161, and His164. Tyr168 is an active-site residue. Positions 224, 258, and 261 each coordinate Fe cation.

Belongs to the ribonucleoside diphosphate reductase small chain family. Heterodimer of a large and a small subunit. Fe cation is required as a cofactor.

The enzyme catalyses a 2'-deoxyribonucleoside 5'-diphosphate + [thioredoxin]-disulfide + H2O = a ribonucleoside 5'-diphosphate + [thioredoxin]-dithiol. Provides the precursors necessary for DNA synthesis. Catalyzes the biosynthesis of deoxyribonucleotides from the corresponding ribonucleotides. The protein is Ribonucleoside-diphosphate reductase small chain of Spisula solidissima (Atlantic surf-clam).